Reading from the N-terminus, the 108-residue chain is UPF0145 protein Acel_2109 (108 aa).

This sequence belongs to the UPF0145 family.

This is UPF0145 protein Acel_2109 from Acidothermus cellulolyticus (strain ATCC 43068 / DSM 8971 / 11B).